The primary structure comprises 197 residues: Dephospho-CoA kinase (197 aa).

The region spanning 4 to 197 (RLGLTGSIGM…RQIRAGNIHA (194 aa)) is the DPCK domain. Position 12-17 (12-17 (GMGKST)) interacts with ATP.

Belongs to the CoaE family.

It localises to the cytoplasm. It catalyses the reaction 3'-dephospho-CoA + ATP = ADP + CoA + H(+). It participates in cofactor biosynthesis; coenzyme A biosynthesis; CoA from (R)-pantothenate: step 5/5. Its function is as follows. Catalyzes the phosphorylation of the 3'-hydroxyl group of dephosphocoenzyme A to form coenzyme A. In Ruegeria pomeroyi (strain ATCC 700808 / DSM 15171 / DSS-3) (Silicibacter pomeroyi), this protein is Dephospho-CoA kinase.